The chain runs to 399 residues: MMRASYLFTSESVSEGHPDKVCDRISDEIVDLFYREGPKAGIDPWQIRAACETLATTNKVVIAGETRGPSSVTNEHIEHVVREAIKDIGYEQEGFHWKTCDIEILLHPQSADIAQGVDALQPGEVKEEGAGDQGIMFGYACNETPDLMPAPIFYAHKILRMIAEARHSGVEKVLGPDSKSQVTVRYENGKPVGVREIVVSHQHLIPDMTSAQVRERVEPYVREALPKDWITKDTIWHINPTGKFYIGGPDGDTGLTGRKIIVDTYGGAAPHGGGAFSGKDPTKVDRSAAYAARYLAKNIVAAGLADRCTLQLAYAIGVARPLSIYIDTHGTGKVSEDKLEKAAAEVMNLTPRGIRSHLDLNRPIYARTAAYGHFGRTPDNEGGFSWEKTDLAEAFKRAV.

Residue His-17 coordinates ATP. Asp-19 serves as a coordination point for Mg(2+). A K(+)-binding site is contributed by Glu-52. 2 residues coordinate L-methionine: Glu-65 and Gln-109. The flexible loop stretch occupies residues 109 to 119 (QSADIAQGVDA). ATP contacts are provided by residues 177–179 (DSK), 243–244 (KF), Asp-252, 258–259 (RK), Ala-275, and Lys-279. Residue Asp-252 coordinates L-methionine. Position 283 (Lys-283) interacts with L-methionine.

Belongs to the AdoMet synthase family. As to quaternary structure, homotetramer; dimer of dimers. Mg(2+) is required as a cofactor. Requires K(+) as cofactor.

Its subcellular location is the cytoplasm. The catalysed reaction is L-methionine + ATP + H2O = S-adenosyl-L-methionine + phosphate + diphosphate. The protein operates within amino-acid biosynthesis; S-adenosyl-L-methionine biosynthesis; S-adenosyl-L-methionine from L-methionine: step 1/1. Catalyzes the formation of S-adenosylmethionine (AdoMet) from methionine and ATP. The overall synthetic reaction is composed of two sequential steps, AdoMet formation and the subsequent tripolyphosphate hydrolysis which occurs prior to release of AdoMet from the enzyme. This Bradyrhizobium sp. (strain ORS 278) protein is S-adenosylmethionine synthase.